A 434-amino-acid polypeptide reads, in one-letter code: 3-phosphoshikimate 1-carboxyvinyltransferase (434 aa).

Positions 22, 23, and 27 each coordinate 3-phosphoshikimate. A phosphoenolpyruvate-binding site is contributed by K22. Positions 93 and 121 each coordinate phosphoenolpyruvate. 3-phosphoshikimate contacts are provided by S168, S169, Q170, S199, D320, and K347. Q170 lines the phosphoenolpyruvate pocket. D320 acts as the Proton acceptor in catalysis. R351, R394, and K419 together coordinate phosphoenolpyruvate.

This sequence belongs to the EPSP synthase family. As to quaternary structure, monomer.

It localises to the cytoplasm. The catalysed reaction is 3-phosphoshikimate + phosphoenolpyruvate = 5-O-(1-carboxyvinyl)-3-phosphoshikimate + phosphate. It functions in the pathway metabolic intermediate biosynthesis; chorismate biosynthesis; chorismate from D-erythrose 4-phosphate and phosphoenolpyruvate: step 6/7. Its function is as follows. Catalyzes the transfer of the enolpyruvyl moiety of phosphoenolpyruvate (PEP) to the 5-hydroxyl of shikimate-3-phosphate (S3P) to produce enolpyruvyl shikimate-3-phosphate and inorganic phosphate. The polypeptide is 3-phosphoshikimate 1-carboxyvinyltransferase (Burkholderia lata (strain ATCC 17760 / DSM 23089 / LMG 22485 / NCIMB 9086 / R18194 / 383)).